Reading from the N-terminus, the 120-residue chain is Nitrogenase-stabilizing/protective protein NifW (120 aa).

The protein belongs to the NifW family. Homotrimer; associates with NifD.

Its function is as follows. May protect the nitrogenase Fe-Mo protein from oxidative damage. The chain is Nitrogenase-stabilizing/protective protein NifW from Rhodospirillum rubrum (strain ATCC 11170 / ATH 1.1.1 / DSM 467 / LMG 4362 / NCIMB 8255 / S1).